The following is a 180-amino-acid chain: Crossover junction endodeoxyribonuclease RuvC (180 aa).

Active-site residues include Asp-7, Glu-66, and Asp-138. Residues Asp-7, Glu-66, and Asp-138 each contribute to the Mg(2+) site.

It belongs to the RuvC family. As to quaternary structure, homodimer which binds Holliday junction (HJ) DNA. The HJ becomes 2-fold symmetrical on binding to RuvC with unstacked arms; it has a different conformation from HJ DNA in complex with RuvA. In the full resolvosome a probable DNA-RuvA(4)-RuvB(12)-RuvC(2) complex forms which resolves the HJ. It depends on Mg(2+) as a cofactor.

Its subcellular location is the cytoplasm. It carries out the reaction Endonucleolytic cleavage at a junction such as a reciprocal single-stranded crossover between two homologous DNA duplexes (Holliday junction).. Its function is as follows. The RuvA-RuvB-RuvC complex processes Holliday junction (HJ) DNA during genetic recombination and DNA repair. Endonuclease that resolves HJ intermediates. Cleaves cruciform DNA by making single-stranded nicks across the HJ at symmetrical positions within the homologous arms, yielding a 5'-phosphate and a 3'-hydroxyl group; requires a central core of homology in the junction. The consensus cleavage sequence is 5'-(A/T)TT(C/G)-3'. Cleavage occurs on the 3'-side of the TT dinucleotide at the point of strand exchange. HJ branch migration catalyzed by RuvA-RuvB allows RuvC to scan DNA until it finds its consensus sequence, where it cleaves and resolves the cruciform DNA. The polypeptide is Crossover junction endodeoxyribonuclease RuvC (Burkholderia multivorans (strain ATCC 17616 / 249)).